The chain runs to 276 residues: Undecaprenyl-diphosphatase (276 aa).

The next 5 membrane-spanning stretches (helical) occupy residues 85–105 (MNVV…EKTI), 108–128 (VLFA…AILW), 187–207 (VATE…TLYE), 217–237 (VDSV…AFAC), and 253–273 (FAWY…SGWI).

Belongs to the UppP family.

It is found in the cell inner membrane. The enzyme catalyses di-trans,octa-cis-undecaprenyl diphosphate + H2O = di-trans,octa-cis-undecaprenyl phosphate + phosphate + H(+). Functionally, catalyzes the dephosphorylation of undecaprenyl diphosphate (UPP). Confers resistance to bacitracin. This Burkholderia mallei (strain NCTC 10247) protein is Undecaprenyl-diphosphatase.